The chain runs to 258 residues: Type III pantothenate kinase (258 aa).

6–13 (DVGNTNTV) serves as a coordination point for ATP. Residues Y100 and 107 to 110 (GADR) contribute to the substrate site. The active-site Proton acceptor is D109. K(+) is bound at residue D129. T132 contributes to the ATP binding site. T184 serves as a coordination point for substrate.

Belongs to the type III pantothenate kinase family. In terms of assembly, homodimer. The cofactor is NH4(+). It depends on K(+) as a cofactor.

Its subcellular location is the cytoplasm. It catalyses the reaction (R)-pantothenate + ATP = (R)-4'-phosphopantothenate + ADP + H(+). Its pathway is cofactor biosynthesis; coenzyme A biosynthesis; CoA from (R)-pantothenate: step 1/5. Functionally, catalyzes the phosphorylation of pantothenate (Pan), the first step in CoA biosynthesis. In Bacillus licheniformis (strain ATCC 14580 / DSM 13 / JCM 2505 / CCUG 7422 / NBRC 12200 / NCIMB 9375 / NCTC 10341 / NRRL NRS-1264 / Gibson 46), this protein is Type III pantothenate kinase.